The sequence spans 354 residues: MKSLLLLVLISVCWADHLSNNYTLDHDRVIHIQAENGPRLLVEAEQAKVFSHRGGNVTLPCKFFRDPTAFGSGTHKIRIKWTKLTSDYLKEVDVFVSMGYHKKTYGGYHGRVFLKGGSDNDASLVITDLTLEDYGRYKCEVIEGLEDDTAVVALDLEGVVFPYFPRLGRYNLNFHEAQQACLDQDAVIASFDQLYDAWRGGLDWCNAGWLSDGSVQYPITKPREPCGGQNTVPGVRNYGFWDKDKSRYDVFCFTSNFNGRFYYLIHPTKLTYDEAVQACLNDGAQIAKVGQIFAAWKLLGYDRCDAGWLADGSVRYPISRPRRRCRPNEAAVRFVGFPDKKHKLYGVYCFRAYN.

Positions 1 to 9 (MKSLLLLVL) are excised as a propeptide. Residues asparagine 21 and asparagine 56 are each glycosylated (N-linked (GlcNAc...) asparagine). The 115-residue stretch at 38 to 152 (PRLLVEAEQA…EGLEDDTAVV (115 aa)) folds into the Ig-like V-type domain. Intrachain disulfides connect cysteine 61–cysteine 139, cysteine 181–cysteine 252, cysteine 205–cysteine 226, cysteine 279–cysteine 349, and cysteine 304–cysteine 325. 2 Link domains span residues 159 to 254 (VVFP…FCFT) and 259 to 351 (GRFY…YCFR).

Belongs to the HAPLN family.

The protein localises to the secreted. It localises to the extracellular space. Its subcellular location is the extracellular matrix. Stabilizes the aggregates of proteoglycan monomers with hyaluronic acid in the extracellular cartilage matrix. The chain is Hyaluronan and proteoglycan link protein 1 (HAPLN1) from Sus scrofa (Pig).